Consider the following 698-residue polypeptide: SPX domain-containing membrane protein OsI_21475 (698 aa).

One can recognise an SPX domain in the interval 2 to 145 (VNFGKKLMAD…GYRFTDYYVT (144 aa)). The next 6 membrane-spanning stretches (helical) occupy residues 248–268 (FMSL…TYII), 279–299 (LGAA…AQIF), 316–336 (LIFS…AYDM), 339–357 (LTVL…ARAV), 376–396 (AGFV…AGLL), and 412–432 (LPGW…WISF). The tract at residues 467–495 (LLRDSSKKDEDDDEEVDDSEEGTHDSRKP) is disordered. Acidic residues predominate over residues 476–486 (EDDDEEVDDSE). Helical transmembrane passes span 514 to 534 (LLIY…SSVI), 545 to 565 (AVAI…AVVG), 577 to 597 (LLMV…KITS), 605 to 625 (VVSA…NLSL), and 671 to 691 (LLNV…ASTF).

It belongs to the major facilitator superfamily.

The protein resides in the membrane. This chain is SPX domain-containing membrane protein OsI_21475, found in Oryza sativa subsp. indica (Rice).